A 302-amino-acid polypeptide reads, in one-letter code: Aspartate carbamoyltransferase catalytic subunit (302 aa).

The carbamoyl phosphate site is built by R53 and T54. K82 serves as a coordination point for L-aspartate. Positions 103, 131, and 134 each coordinate carbamoyl phosphate. Positions 164 and 223 each coordinate L-aspartate. Carbamoyl phosphate contacts are provided by L260 and P261.

Belongs to the aspartate/ornithine carbamoyltransferase superfamily. ATCase family. As to quaternary structure, heterooligomer of catalytic and regulatory chains.

It carries out the reaction carbamoyl phosphate + L-aspartate = N-carbamoyl-L-aspartate + phosphate + H(+). Its pathway is pyrimidine metabolism; UMP biosynthesis via de novo pathway; (S)-dihydroorotate from bicarbonate: step 2/3. In terms of biological role, catalyzes the condensation of carbamoyl phosphate and aspartate to form carbamoyl aspartate and inorganic phosphate, the committed step in the de novo pyrimidine nucleotide biosynthesis pathway. This is Aspartate carbamoyltransferase catalytic subunit from Methanococcus vannielii (strain ATCC 35089 / DSM 1224 / JCM 13029 / OCM 148 / SB).